Here is a 357-residue protein sequence, read N- to C-terminus: Glucose-6-phosphatase catalytic subunit 1 (357 aa).

Topologically, residues 1-28 are lumenal; it reads MEERMNVLHDFGIQSTRYLQVNYEDSQD. A helical membrane pass occupies residues 29–49; sequence WFVLVSVIADLRNAFYVLFPI. At 50–60 the chain is on the cytoplasmic side; the sequence is WFHIQETVGIN. A helical membrane pass occupies residues 61–81; that stretch reads LLWVAVVGDWFNLVFKWILFG. The Lumenal segment spans residues 82–117; that stretch reads QRPYWWVLDTDYYSNSSVPLIKQFPVTCETGPGSPS. R83 contributes to the substrate binding site. An N-linked (GlcNAc...) asparagine glycan is attached at N96. Residues 118–138 form a helical membrane-spanning segment; it reads GHAMGTAGVYYVMVTSTLAIF. H119 acts as the Proton donor in catalysis. The Cytoplasmic segment spans residues 139 to 147; it reads RGKKKSTYG. The helical transmembrane segment at 148–168 threads the bilayer; the sequence is FRCLNVVLWLGYWAVQLNVCL. Over 169-170 the chain is Lumenal; the sequence is SR. Position 170 (R170) interacts with substrate. The chain crosses the membrane as a helical span at residues 171-191; the sequence is IYLAAHFPHQVVAGVLSGIAV. The active-site Nucleophile is H176. The Cytoplasmic segment spans residues 192–211; sequence AETFSHIRGIYNASLQRYCL. The helical transmembrane segment at 212–232 threads the bilayer; the sequence is ITFFLFGFALGFYLLLKGLGV. Over 233 to 254 the chain is Lumenal; it reads DLLWTLEKAKRWCERPEWVHLD. A helical membrane pass occupies residues 255–275; that stretch reads TTPFASLFKNLGTLLGLGLAL. Topologically, residues 276–291 are cytoplasmic; that stretch reads NSSMYRKSCKGELRKS. Residues 292 to 312 traverse the membrane as a helical segment; that stretch reads LPFRLACIVASLGLLHLFDSL. Topologically, residues 313–320 are lumenal; the sequence is KPPSQIES. A helical transmembrane segment spans residues 321–341; the sequence is IFYILSFCKSATVPFASVSLI. Topologically, residues 342–357 are cytoplasmic; sequence PYCLARLLGQTHKKSL. Residues 354–357 carry the Prevents secretion from ER motif; it reads KKSL.

Belongs to the glucose-6-phosphatase family.

It is found in the endoplasmic reticulum membrane. The catalysed reaction is D-glucose 6-phosphate + H2O = D-glucose + phosphate. The protein operates within carbohydrate biosynthesis; gluconeogenesis. Functionally, hydrolyzes glucose-6-phosphate to glucose in the endoplasmic reticulum. Forms with the glucose-6-phosphate transporter (SLC37A4/G6PT) the complex responsible for glucose production in the terminal step of glycogenolysis and gluconeogenesis. Hence, it is the key enzyme in homeostatic regulation of blood glucose levels. The protein is Glucose-6-phosphatase catalytic subunit 1 (G6pc1) of Rattus norvegicus (Rat).